Consider the following 1052-residue polypeptide: 3-hydroxy-3-methylglutaryl coenzyme A reductase mokG (1052 aa).

The next 6 helical transmembrane spans lie at 223 to 243 (VDMAIIGLGYLALNMTLVSLF), 253 to 273 (FWLAASVLLSGAFAFVFGLGV), 279 to 299 (VPVDMLLLSEGIPFLVLTVGF), 349 to 369 (GWSIVQSYLLEIGALALGAVF), 378 to 398 (FCFLAAWMVLFDAILLFTFYA), and 440 to 460 (WKLIMVGGFVLFNVLQLSSFF). Residues 224 to 403 (DMAIIGLGYL…FTFYATILCV (180 aa)) form the SSD domain. Residues 461–617 (YRIMGGFMTN…FKANQAESLT (157 aa)) are linker. Residues 571–594 (APKESAAPAPPSSPASVPSAVPVP) are disordered. Over residues 584–594 (PASVPSAVPVP) the composition is skewed to low complexity. The catalytic stretch occupies residues 618-1044 (DDELAELCLR…LVNAHMRHNR (427 aa)). Glutamate 734 (charge relay system) is an active-site residue. Asparagine 798 is a glycosylation site (N-linked (GlcNAc...) asparagine). Active-site charge relay system residues include lysine 867 and aspartate 943. The active-site Proton donor is histidine 1039. Asparagine 1043 carries an N-linked (GlcNAc...) asparagine glycan.

It belongs to the HMG-CoA reductase family.

It localises to the endoplasmic reticulum membrane. The enzyme catalyses (R)-mevalonate + 2 NADP(+) + CoA = (3S)-3-hydroxy-3-methylglutaryl-CoA + 2 NADPH + 2 H(+). The protein operates within polyketide biosynthesis; lovastatin biosynthesis. In terms of biological role, HMG-CoA reductase; part of the gene cluster that mediates the biosynthesis of monakolin K, also known as lovastatin, and which acts as a potent competitive inhibitor of HMG-CoA reductase. Monakolin K biosynthesis is performed in two stages. The first stage is catalyzed by the nonaketide synthase mokA, which belongs to type I polyketide synthases and catalyzes the iterative nine-step formation of the polyketide. This PKS stage is completed by the action of dehydrogenase mokE, which catalyzes the NADPH-dependent reduction of the unsaturated tetra-, penta- and heptaketide intermediates that arise during the mokA-mediated biosynthesis of the nonaketide chain and leads to dihydromonacolin L. Covalently bound dihydromonacolin L is released from mokA by the mokD esterase. Conversion of dihydromonacolin L into monacolin L and then monacolin J is subsequently performed with the participation of molecular oxygen and P450 monoogygenase mokC. Finally, mokF performs the conversion of monacoline J to monacoline K through the addition of the side-chain diketide moiety (2R)-2-methylbutanoate produced by the diketide synthase mokB. HMG-CoA reductase mokG may act as a down-regulator of monacolin K production. This is 3-hydroxy-3-methylglutaryl coenzyme A reductase mokG from Monascus pilosus (Red mold).